A 141-amino-acid chain; its full sequence is Large ribosomal subunit protein uL11 (141 aa).

This sequence belongs to the universal ribosomal protein uL11 family. In terms of assembly, part of the ribosomal stalk of the 50S ribosomal subunit. Interacts with L10 and the large rRNA to form the base of the stalk. L10 forms an elongated spine to which L12 dimers bind in a sequential fashion forming a multimeric L10(L12)X complex. In terms of processing, one or more lysine residues are methylated.

In terms of biological role, forms part of the ribosomal stalk which helps the ribosome interact with GTP-bound translation factors. This is Large ribosomal subunit protein uL11 from Synechocystis sp. (strain ATCC 27184 / PCC 6803 / Kazusa).